A 1253-amino-acid chain; its full sequence is Cytoplasmic FMR1-interacting protein 2 (1253 aa).

The protein belongs to the CYFIP family.

The protein localises to the cytoplasm. In terms of biological role, involved in T-cell adhesion and p53-dependent induction of apoptosis. Does not bind RNA. The chain is Cytoplasmic FMR1-interacting protein 2 (cyfip2) from Xenopus laevis (African clawed frog).